We begin with the raw amino-acid sequence, 458 residues long: Probable mitochondrial chaperone BCS1-B (458 aa).

Over 1–26 the chain is Mitochondrial intermembrane; it reads MENVITNNNKGLPKSILKFIPEPIQP. The helical transmembrane segment at 27–47 threads the bilayer; that stretch reads LFENPFFSAGFGLIGVGSILA. At 48–458 the chain is on the mitochondrial matrix side; sequence MGRKGFQQAM…INNLNELIKK (411 aa). 248 to 255 provides a ligand contact to ATP; it reads GPPGTGKS.

It belongs to the AAA ATPase family. BCS1 subfamily.

The protein localises to the mitochondrion inner membrane. The enzyme catalyses ATP + H2O = ADP + phosphate + H(+). Its function is as follows. Chaperone necessary for the assembly of mitochondrial respiratory chain complex III. In Dictyostelium discoideum (Social amoeba), this protein is Probable mitochondrial chaperone BCS1-B (bcsl1b).